Consider the following 317-residue polypeptide: NAD-dependent protein deacetylase Sirt6 (317 aa).

Residues 27-273 enclose the Deacetylase sirtuin-type domain; it reads DEVVAEKCQE…SKVCKLLGVE (247 aa). Residues A53, T57, F64, R65, W71, Q113, and H133 each coordinate NAD(+). H133 serves as the catalytic Proton acceptor. Zn(2+) is bound by residues C141, C144, C166, and C177. NAD(+) is bound by residues G215, N241, Q243, and V259.

Belongs to the sirtuin family. Class IV subfamily. The cofactor is Zn(2+). Widely expressed.

Its subcellular location is the nucleus. It is found in the chromosome. The catalysed reaction is N(6)-acetyl-L-lysyl-[protein] + NAD(+) + H2O = 2''-O-acetyl-ADP-D-ribose + nicotinamide + L-lysyl-[protein]. Functionally, NAD-dependent histone deacylase that acts as a regulator of life span. The chain is NAD-dependent protein deacetylase Sirt6 from Drosophila melanogaster (Fruit fly).